Consider the following 632-residue polypeptide: Biosynthetic arginine decarboxylase (632 aa).

K101 is subject to N6-(pyridoxal phosphate)lysine. 281–291 (FDVGGGLGVDY) is a substrate binding site.

Belongs to the Orn/Lys/Arg decarboxylase class-II family. SpeA subfamily. Requires Mg(2+) as cofactor. It depends on pyridoxal 5'-phosphate as a cofactor.

The enzyme catalyses L-arginine + H(+) = agmatine + CO2. Its pathway is amine and polyamine biosynthesis; agmatine biosynthesis; agmatine from L-arginine: step 1/1. In terms of biological role, catalyzes the biosynthesis of agmatine from arginine. This chain is Biosynthetic arginine decarboxylase, found in Klebsiella pneumoniae (strain 342).